The following is a 187-amino-acid chain: Elongation factor P (187 aa).

The protein belongs to the elongation factor P family.

It is found in the cytoplasm. It functions in the pathway protein biosynthesis; polypeptide chain elongation. Involved in peptide bond synthesis. Stimulates efficient translation and peptide-bond synthesis on native or reconstituted 70S ribosomes in vitro. Probably functions indirectly by altering the affinity of the ribosome for aminoacyl-tRNA, thus increasing their reactivity as acceptors for peptidyl transferase. The protein is Elongation factor P of Gloeobacter violaceus (strain ATCC 29082 / PCC 7421).